Consider the following 493-residue polypeptide: MSFKDLRSFIDHLEANGELKRISYPVDPYLEMTEIADRVLRSGGPALLFENPKDNTMPVLVNLFGTPKRVAMALGKEDPLALREVGELLAFLKEPEPPTGFKDALAKLPKFKQALNMPPKSVSHAPCQQVVITGDEVDLTALPIQHCWPGDVAPLVTWGLTITKGPRQKRQNLGIYRQQLLGKNKLIMRWLDHRGGALDFKDFKELHPGERYPVVVALGSDPVTILAAVTPVPDSMSEYAFAGLLRGERTEVCKAISCDLEVPATSEIILEGYIDPNEMAEEGPYGDHTGYYNETDSFPVFTVTHITKRKDAIYHSTYTGRPPDEPAMLGVALNEVFVPILRKQYPEIIDFYLPPEGCSYRMAVISIRKQYPGHAKRVMMGAWSFLRQFMYTKFIIVVDEDVNCRDWQDVIWAITTRMDPTRDTTLIDHTPIDYLDFASPVAGLGSKMGLDATNKWPGETQREWGTPIVMDPNVKQKVDEIWQDLGIDSHPTL.

Asn-172 serves as a coordination point for Mn(2+). Prenylated FMN contacts are provided by residues 175–177 (IYR), 189–191 (RWL), and 194–195 (RG). Glu-238 contributes to the Mn(2+) binding site. The active-site Proton donor is Asp-287.

The protein belongs to the UbiD family. As to quaternary structure, homohexamer. Requires prenylated FMN as cofactor. Mn(2+) serves as cofactor.

The protein localises to the cell membrane. The catalysed reaction is a 4-hydroxy-3-(all-trans-polyprenyl)benzoate + H(+) = a 2-(all-trans-polyprenyl)phenol + CO2. The protein operates within cofactor biosynthesis; ubiquinone biosynthesis. In terms of biological role, catalyzes the decarboxylation of 3-octaprenyl-4-hydroxy benzoate to 2-octaprenylphenol, an intermediate step in ubiquinone biosynthesis. The sequence is that of 3-octaprenyl-4-hydroxybenzoate carboxy-lyase from Shewanella denitrificans (strain OS217 / ATCC BAA-1090 / DSM 15013).